The following is a 315-amino-acid chain: DNA-directed RNA polymerase subunit alpha (315 aa).

Positions 1 to 228 (MLEIEKPKIE…EHLRLFIGLT (228 aa)) are alpha N-terminal domain (alpha-NTD). Residues 246–315 (DKILEMTIEE…LGLSLRQEDE (70 aa)) form an alpha C-terminal domain (alpha-CTD) region.

It belongs to the RNA polymerase alpha chain family. Homodimer. The RNAP catalytic core consists of 2 alpha, 1 beta, 1 beta' and 1 omega subunit. When a sigma factor is associated with the core the holoenzyme is formed, which can initiate transcription.

It carries out the reaction RNA(n) + a ribonucleoside 5'-triphosphate = RNA(n+1) + diphosphate. In terms of biological role, DNA-dependent RNA polymerase catalyzes the transcription of DNA into RNA using the four ribonucleoside triphosphates as substrates. The protein is DNA-directed RNA polymerase subunit alpha of Desulforamulus reducens (strain ATCC BAA-1160 / DSM 100696 / MI-1) (Desulfotomaculum reducens).